The following is a 295-amino-acid chain: Aspartate carbamoyltransferase catalytic subunit (295 aa).

Arg49 and Thr50 together coordinate carbamoyl phosphate. Residue Lys77 coordinates L-aspartate. The carbamoyl phosphate site is built by Arg99, His127, and Gln130. L-aspartate is bound by residues Arg161 and Arg212. 2 residues coordinate carbamoyl phosphate: Gly251 and Pro252.

It belongs to the aspartate/ornithine carbamoyltransferase superfamily. ATCase family. As to quaternary structure, heterododecamer (2C3:3R2) of six catalytic PyrB chains organized as two trimers (C3), and six regulatory PyrI chains organized as three dimers (R2).

It carries out the reaction carbamoyl phosphate + L-aspartate = N-carbamoyl-L-aspartate + phosphate + H(+). It functions in the pathway pyrimidine metabolism; UMP biosynthesis via de novo pathway; (S)-dihydroorotate from bicarbonate: step 2/3. In terms of biological role, catalyzes the condensation of carbamoyl phosphate and aspartate to form carbamoyl aspartate and inorganic phosphate, the committed step in the de novo pyrimidine nucleotide biosynthesis pathway. The protein is Aspartate carbamoyltransferase catalytic subunit of Campylobacter jejuni (strain RM1221).